The chain runs to 340 residues: Protein-glutamate methylesterase/protein-glutamine glutaminase 1 (340 aa).

A Response regulatory domain is found at 5 to 122; it reads KLFIVDDSAL…KVVSELKEKI (118 aa). Aspartate 56 carries the 4-aspartylphosphate modification. A CheB-type methylesterase domain is found at 148–340; it reads GKNGRQLVVI…AIAEEIAANI (193 aa). Active-site residues include serine 160, histidine 187, and aspartate 285.

The protein belongs to the CheB family. Post-translationally, phosphorylated by CheA. Phosphorylation of the N-terminal regulatory domain activates the methylesterase activity.

The protein localises to the cytoplasm. It catalyses the reaction [protein]-L-glutamate 5-O-methyl ester + H2O = L-glutamyl-[protein] + methanol + H(+). The catalysed reaction is L-glutaminyl-[protein] + H2O = L-glutamyl-[protein] + NH4(+). In terms of biological role, involved in chemotaxis. Part of a chemotaxis signal transduction system that modulates chemotaxis in response to various stimuli. Catalyzes the demethylation of specific methylglutamate residues introduced into the chemoreceptors (methyl-accepting chemotaxis proteins or MCP) by CheR. Also mediates the irreversible deamidation of specific glutamine residues to glutamic acid. This is Protein-glutamate methylesterase/protein-glutamine glutaminase 1 from Carboxydothermus hydrogenoformans (strain ATCC BAA-161 / DSM 6008 / Z-2901).